The following is a 39-amino-acid chain: Cygnin (39 aa).

Residue glutamine 1 is modified to Pyrrolidone carboxylic acid. Disulfide bonds link cysteine 6-cysteine 33, cysteine 12-cysteine 28, and cysteine 16-cysteine 32.

The protein belongs to the transferrin family.

The protein is Cygnin of Cygnus atratus (Black swan).